The primary structure comprises 822 residues: General transcription factor 3C polypeptide 4 (822 aa).

M1 carries the N-acetylmethionine modification. A disordered region spans residues 1-41 (MNTADQARVGPADDGPAPSGEEEGEGGGEAGGKEPAADAAP). S19 carries the post-translational modification Phosphoserine. A Glycyl lysine isopeptide (Lys-Gly) (interchain with G-Cter in SUMO2) cross-link involves residue K225. S604 and S611 each carry phosphoserine. The interval 608–663 (LVDSPGMGNADDEQQEEGTSSKQVVKQGLQERSKEGDVEEPTDDSLPTTGDAGGRE) is disordered. K629 participates in a covalent cross-link: Glycyl lysine isopeptide (Lys-Gly) (interchain with G-Cter in SUMO2). S652 is subject to Phosphoserine.

The protein belongs to the TFIIIC subunit 4 family. Part of the TFIIIC subcomplex TFIIIC2, consisting of six subunits, GTF3C1, GTF3C2, GTF3C3, GTF3C4, GTF3C5 and GTF3C6. Interacts with BRF1, GTF3C1, GTF3C2, GTF3C5, GTF3C6, POLR3C and POLR3F.

The protein localises to the nucleus. It catalyses the reaction L-lysyl-[protein] + acetyl-CoA = N(6)-acetyl-L-lysyl-[protein] + CoA + H(+). In terms of biological role, essential for RNA polymerase III to make a number of small nuclear and cytoplasmic RNAs, including 5S RNA, tRNA, and adenovirus-associated (VA) RNA of both cellular and viral origin. Has histone acetyltransferase activity (HAT) with unique specificity for free and nucleosomal H3. May cooperate with GTF3C5 in facilitating the recruitment of TFIIIB and RNA polymerase through direct interactions with BRF1, POLR3C and POLR3F. May be localized close to the A box. The chain is General transcription factor 3C polypeptide 4 (GTF3C4) from Homo sapiens (Human).